The sequence spans 393 residues: NAD(P)H-quinone oxidoreductase subunit H, chloroplastic (393 aa).

The protein belongs to the complex I 49 kDa subunit family. As to quaternary structure, NDH is composed of at least 16 different subunits, 5 of which are encoded in the nucleus.

It localises to the plastid. The protein resides in the chloroplast thylakoid membrane. The catalysed reaction is a plastoquinone + NADH + (n+1) H(+)(in) = a plastoquinol + NAD(+) + n H(+)(out). The enzyme catalyses a plastoquinone + NADPH + (n+1) H(+)(in) = a plastoquinol + NADP(+) + n H(+)(out). Its function is as follows. NDH shuttles electrons from NAD(P)H:plastoquinone, via FMN and iron-sulfur (Fe-S) centers, to quinones in the photosynthetic chain and possibly in a chloroplast respiratory chain. The immediate electron acceptor for the enzyme in this species is believed to be plastoquinone. Couples the redox reaction to proton translocation, and thus conserves the redox energy in a proton gradient. The chain is NAD(P)H-quinone oxidoreductase subunit H, chloroplastic from Ranunculus macranthus (Large buttercup).